A 366-amino-acid chain; its full sequence is Peptide chain release factor 2 (366 aa).

Gln-251 carries the post-translational modification N5-methylglutamine.

Belongs to the prokaryotic/mitochondrial release factor family. In terms of processing, methylated by PrmC. Methylation increases the termination efficiency of RF2.

The protein localises to the cytoplasm. Functionally, peptide chain release factor 2 directs the termination of translation in response to the peptide chain termination codons UGA and UAA. The polypeptide is Peptide chain release factor 2 (Exiguobacterium sp. (strain ATCC BAA-1283 / AT1b)).